A 284-amino-acid polypeptide reads, in one-letter code: MFRLWNQLTKPRVTVLVLATVLPGMYLGTTGYPSLTVISITLFGTYLMSSASFILNQYIERERDAVMYRTKQRPIPAGEISPTFALLLGIVVAIVSFGILTYFINLLTAVCALAALLLYVFLYTIWLKPRTEQNIVIGGISGCIGPLIGYAAMANALPMQAWVMFLMIFLWTPAHFWALAIFLKDDYEFAGIPMMPVVSGIEKTVNQIFLYAIAYSLSVIGFYFVDDRMGYLFLLSAIVLTVLILGFAYRLKLSMDKVLAKRFFFFSILHLFLVSIAIVIDSKI.

9 consecutive transmembrane segments (helical) span residues 13 to 33, 35 to 55, 84 to 104, 106 to 126, 134 to 154, 163 to 183, 205 to 225, 229 to 249, and 264 to 284; these read VTVL…TGYP, LTVI…SFIL, FALL…TYFI, LLTA…YTIW, NIVI…AAMA, VMFL…AIFL, VNQI…FYFV, MGYL…GFAY, and FFFS…DSKI.

This sequence belongs to the UbiA prenyltransferase family. Protoheme IX farnesyltransferase subfamily.

The protein localises to the cell inner membrane. It carries out the reaction heme b + (2E,6E)-farnesyl diphosphate + H2O = Fe(II)-heme o + diphosphate. It functions in the pathway porphyrin-containing compound metabolism; heme O biosynthesis; heme O from protoheme: step 1/1. Converts heme B (protoheme IX) to heme O by substitution of the vinyl group on carbon 2 of heme B porphyrin ring with a hydroxyethyl farnesyl side group. This is Protoheme IX farnesyltransferase from Leptospira biflexa serovar Patoc (strain Patoc 1 / Ames).